The sequence spans 520 residues: Glucose-6-phosphate isomerase (520 aa).

Glutamate 327 serves as the catalytic Proton donor. Residues histidine 358 and lysine 486 contribute to the active site.

Belongs to the GPI family.

The protein resides in the cytoplasm. The enzyme catalyses alpha-D-glucose 6-phosphate = beta-D-fructose 6-phosphate. It participates in carbohydrate biosynthesis; gluconeogenesis. The protein operates within carbohydrate degradation; glycolysis; D-glyceraldehyde 3-phosphate and glycerone phosphate from D-glucose: step 2/4. Its function is as follows. Catalyzes the reversible isomerization of glucose-6-phosphate to fructose-6-phosphate. This chain is Glucose-6-phosphate isomerase, found in Bordetella avium (strain 197N).